The following is a 163-amino-acid chain: Nucleotide-binding protein HAPS_2236 (163 aa).

It belongs to the YajQ family.

In terms of biological role, nucleotide-binding protein. The chain is Nucleotide-binding protein HAPS_2236 from Glaesserella parasuis serovar 5 (strain SH0165) (Haemophilus parasuis).